A 940-amino-acid polypeptide reads, in one-letter code: Valine--tRNA ligase (940 aa).

Residues 47–57 (PNVTGILHMGH) carry the 'HIGH' region motif. Residues 564–568 (KLSKS) carry the 'KMSKS' region motif. Lysine 567 serves as a coordination point for ATP. Residues 872-938 (PIEQITKEKN…LQSILDKLAS (67 aa)) are a coiled coil.

Belongs to the class-I aminoacyl-tRNA synthetase family. ValS type 1 subfamily. In terms of assembly, monomer.

It localises to the cytoplasm. It carries out the reaction tRNA(Val) + L-valine + ATP = L-valyl-tRNA(Val) + AMP + diphosphate. Functionally, catalyzes the attachment of valine to tRNA(Val). As ValRS can inadvertently accommodate and process structurally similar amino acids such as threonine, to avoid such errors, it has a 'posttransfer' editing activity that hydrolyzes mischarged Thr-tRNA(Val) in a tRNA-dependent manner. The chain is Valine--tRNA ligase from Chlamydia felis (strain Fe/C-56) (Chlamydophila felis).